A 171-amino-acid chain; its full sequence is S-ribosylhomocysteine lyase (171 aa).

Residues histidine 54, histidine 58, and cysteine 128 each contribute to the Fe cation site.

It belongs to the LuxS family. Homodimer. It depends on Fe cation as a cofactor.

The catalysed reaction is S-(5-deoxy-D-ribos-5-yl)-L-homocysteine = (S)-4,5-dihydroxypentane-2,3-dione + L-homocysteine. Its function is as follows. Involved in the synthesis of autoinducer 2 (AI-2) which is secreted by bacteria and is used to communicate both the cell density and the metabolic potential of the environment. The regulation of gene expression in response to changes in cell density is called quorum sensing. Catalyzes the transformation of S-ribosylhomocysteine (RHC) to homocysteine (HC) and 4,5-dihydroxy-2,3-pentadione (DPD). The sequence is that of S-ribosylhomocysteine lyase from Escherichia coli O81 (strain ED1a).